Consider the following 639-residue polypeptide: DNA primase (639 aa).

The CHC2-type zinc finger occupies 41 to 65 (CPFHNEKSPSFHVRPNHGHFHCFGC). Residues 262–348 (HQAVVVEGYT…AGQSFVAVAP (87 aa)) enclose the Toprim domain. Residues E268, D319, and D321 each coordinate Mg(2+). The tract at residues 460-479 (RAAQRPTAGPPTELAVRPDP) is disordered.

The protein belongs to the DnaG primase family. In terms of assembly, monomer. Interacts with DnaB. Requires Zn(2+) as cofactor. Mg(2+) is required as a cofactor.

The catalysed reaction is ssDNA + n NTP = ssDNA/pppN(pN)n-1 hybrid + (n-1) diphosphate.. RNA polymerase that catalyzes the synthesis of short RNA molecules used as primers for DNA polymerase during DNA replication. The chain is DNA primase from Mycobacterium bovis (strain ATCC BAA-935 / AF2122/97).